The following is a 116-amino-acid chain: UPF0342 protein RBAM_010030 (116 aa).

The protein belongs to the UPF0342 family.

The protein is UPF0342 protein RBAM_010030 of Bacillus velezensis (strain DSM 23117 / BGSC 10A6 / LMG 26770 / FZB42) (Bacillus amyloliquefaciens subsp. plantarum).